Consider the following 322-residue polypeptide: MAVYTDITEDELRNFLTQYDVGSLTSYKGIAEGVENSNFLLHTTKDPLILTLYEKRVEKNDLPFFLGLMQHLAAKGLSCPLPLPRKDGELLGELSGRPAALISFLEGMWLRKPEAKHCREVGKALAAMHLASEGFEIKRPNALSVDGWKVLWDKSEERADEVEKGLREEIRPEIDYLAAHWPKDLPAGVIHADLFQDNVFFLGDELSGLIDFYFACNDLLAYDVSICLNAWCFEKDGAYNVTKGKALLEGYQSVRPLSEAELEALPLLSRGSALRFFLTRLYDWLTTPAGALVVKKDPLEYLRKLRFHRTIANVAEYGLAGE.

It belongs to the pseudomonas-type ThrB family.

The enzyme catalyses L-homoserine + ATP = O-phospho-L-homoserine + ADP + H(+). The protein operates within amino-acid biosynthesis; L-threonine biosynthesis; L-threonine from L-aspartate: step 4/5. This Agrobacterium fabrum (strain C58 / ATCC 33970) (Agrobacterium tumefaciens (strain C58)) protein is Homoserine kinase.